Reading from the N-terminus, the 196-residue chain is RNA pyrophosphohydrolase (196 aa).

In terms of domain architecture, Nudix hydrolase spans 6–149 (GYRPNVGIVI…KRDVYRKVMK (144 aa)). The Nudix box motif lies at 38–59 (GGINDNESAEQAMYRELHEEVG).

It belongs to the Nudix hydrolase family. RppH subfamily. Requires a divalent metal cation as cofactor.

Its function is as follows. Accelerates the degradation of transcripts by removing pyrophosphate from the 5'-end of triphosphorylated RNA, leading to a more labile monophosphorylated state that can stimulate subsequent ribonuclease cleavage. The protein is RNA pyrophosphohydrolase of Haemophilus influenzae (strain ATCC 51907 / DSM 11121 / KW20 / Rd).